The sequence spans 338 residues: GTPase Obg (338 aa).

The Obg domain maps to methionine 1–methionine 159. A disordered region spans residues glycine 123 to glutamine 145. One can recognise an OBG-type G domain in the interval alanine 160 to valine 323. GTP is bound by residues glycine 166 to serine 173, phenylalanine 191 to valine 195, aspartate 213 to glycine 216, threonine 280 to aspartate 283, and serine 304 to valine 306. Mg(2+) is bound by residues serine 173 and threonine 193.

The protein belongs to the TRAFAC class OBG-HflX-like GTPase superfamily. OBG GTPase family. In terms of assembly, monomer. Requires Mg(2+) as cofactor.

It localises to the cytoplasm. Its function is as follows. An essential GTPase which binds GTP, GDP and possibly (p)ppGpp with moderate affinity, with high nucleotide exchange rates and a fairly low GTP hydrolysis rate. Plays a role in control of the cell cycle, stress response, ribosome biogenesis and in those bacteria that undergo differentiation, in morphogenesis control. The sequence is that of GTPase Obg from Chlorobium chlorochromatii (strain CaD3).